Reading from the N-terminus, the 250-residue chain is Probable phosphatase VIBHAR_04983 (250 aa).

9 residues coordinate Zn(2+): H8, H10, H16, H41, E74, H102, H132, D194, and H196.

The protein belongs to the PHP family. Zn(2+) is required as a cofactor.

This is Probable phosphatase VIBHAR_04983 from Vibrio campbellii (strain ATCC BAA-1116).